A 443-amino-acid chain; its full sequence is Xaa-Pro dipeptidase (443 aa).

Mn(2+) contacts are provided by D244, D255, H336, E381, and E420.

This sequence belongs to the peptidase M24B family. Bacterial-type prolidase subfamily. Mn(2+) is required as a cofactor.

The enzyme catalyses Xaa-L-Pro dipeptide + H2O = an L-alpha-amino acid + L-proline. In terms of biological role, splits dipeptides with a prolyl residue in the C-terminal position. In Stenotrophomonas maltophilia (strain R551-3), this protein is Xaa-Pro dipeptidase.